The chain runs to 111 residues: Large ribosomal subunit protein uL22 (111 aa).

The protein belongs to the universal ribosomal protein uL22 family. In terms of assembly, part of the 50S ribosomal subunit.

Functionally, this protein binds specifically to 23S rRNA; its binding is stimulated by other ribosomal proteins, e.g. L4, L17, and L20. It is important during the early stages of 50S assembly. It makes multiple contacts with different domains of the 23S rRNA in the assembled 50S subunit and ribosome. In terms of biological role, the globular domain of the protein is located near the polypeptide exit tunnel on the outside of the subunit, while an extended beta-hairpin is found that lines the wall of the exit tunnel in the center of the 70S ribosome. This is Large ribosomal subunit protein uL22 from Alkalilimnicola ehrlichii (strain ATCC BAA-1101 / DSM 17681 / MLHE-1).